The chain runs to 341 residues: HTH-type transcriptional repressor PurR (341 aa).

Positions 2–56 constitute an HTH lacI-type domain; it reads ATIKDVAKRAGVSTTTVSHVINKTRFVADETKAAVWEAIKELHYSPSAVARSLKV. Residues 4–23 constitute a DNA-binding region (H-T-H motif); sequence IKDVAKRAGVSTTTVSHVIN. Residues 48–56 mediate DNA binding; the sequence is SAVARSLKV. Hypoxanthine-binding residues include Tyr-73, Arg-190, Thr-192, Phe-221, and Asp-275.

As to quaternary structure, homodimer.

It functions in the pathway purine metabolism; purine nucleotide biosynthesis [regulation]. Functionally, is the main repressor of the genes involved in the de novo synthesis of purine nucleotides, regulating purB, purC, purEK, purF, purHD, purL, purMN and guaBA expression. PurR is allosterically activated to bind its cognate DNA by binding the purine corepressors, hypoxanthine or guanine, thereby effecting transcription repression. This Edwardsiella ictaluri (strain 93-146) protein is HTH-type transcriptional repressor PurR.